A 340-amino-acid polypeptide reads, in one-letter code: DNA-directed RNA polymerase subunit alpha (340 aa).

The interval 1–236 (MLSLSKNWNT…EQLQLFISFE (236 aa)) is alpha N-terminal domain (alpha-NTD). Positions 251–340 (FSPYLLKRVD…LSKRYEDSYN (90 aa)) are alpha C-terminal domain (alpha-CTD).

This sequence belongs to the RNA polymerase alpha chain family. In terms of assembly, homodimer. The RNAP catalytic core consists of 2 alpha, 1 beta, 1 beta' and 1 omega subunit. When a sigma factor is associated with the core the holoenzyme is formed, which can initiate transcription.

The enzyme catalyses RNA(n) + a ribonucleoside 5'-triphosphate = RNA(n+1) + diphosphate. Its function is as follows. DNA-dependent RNA polymerase catalyzes the transcription of DNA into RNA using the four ribonucleoside triphosphates as substrates. The protein is DNA-directed RNA polymerase subunit alpha of Rickettsia africae (strain ESF-5).